We begin with the raw amino-acid sequence, 166 residues long: UPF0561 protein C2orf68 homolog (166 aa).

The span at 36-49 (RDDYDKKVKQAAKE) shows a compositional bias: basic and acidic residues. The interval 36–108 (RDDYDKKVKQ…EPEPPGHQLF (73 aa)) is disordered.

The protein belongs to the UPF0561 family.

This Bos taurus (Bovine) protein is UPF0561 protein C2orf68 homolog.